The primary structure comprises 229 residues: Potassium/proton antiporter CemA (229 aa).

Transmembrane regions (helical) follow at residues 7–27 (FLPL…SLSF), 106–126 (MILH…YSIL), and 189–209 (IISG…KYWI).

This sequence belongs to the CemA family.

It is found in the plastid. It localises to the chloroplast inner membrane. It catalyses the reaction K(+)(in) + H(+)(out) = K(+)(out) + H(+)(in). In terms of biological role, contributes to K(+)/H(+) antiport activity by supporting proton efflux to control proton extrusion and homeostasis in chloroplasts in a light-dependent manner to modulate photosynthesis. Prevents excessive induction of non-photochemical quenching (NPQ) under continuous-light conditions. Indirectly promotes efficient inorganic carbon uptake into chloroplasts. This is Potassium/proton antiporter CemA from Eucalyptus globulus subsp. globulus (Tasmanian blue gum).